Here is a 378-residue protein sequence, read N- to C-terminus: Quinolinate synthase (378 aa).

Iminosuccinate is bound by residues histidine 59 and serine 80. Position 125 (cysteine 125) interacts with [4Fe-4S] cluster. Iminosuccinate is bound by residues 151–153 and serine 168; that span reads YAN. Cysteine 212 serves as a coordination point for [4Fe-4S] cluster. Residues 238–240 and threonine 255 each bind iminosuccinate; that span reads HPE. Residue cysteine 309 coordinates [4Fe-4S] cluster.

It belongs to the quinolinate synthase family. Type 1 subfamily. The cofactor is [4Fe-4S] cluster.

It is found in the cytoplasm. The enzyme catalyses iminosuccinate + dihydroxyacetone phosphate = quinolinate + phosphate + 2 H2O + H(+). It participates in cofactor biosynthesis; NAD(+) biosynthesis; quinolinate from iminoaspartate: step 1/1. Its function is as follows. Catalyzes the condensation of iminoaspartate with dihydroxyacetone phosphate to form quinolinate. This is Quinolinate synthase from Burkholderia pseudomallei (strain 668).